Reading from the N-terminus, the 98-residue chain is NADH-ubiquinone oxidoreductase chain 4L (98 aa).

3 helical membrane-spanning segments follow: residues 1–21, 29–49, and 61–81; these read MPYI…GTLM, SLLC…LLSL, and LILL…LIMI.

The protein belongs to the complex I subunit 4L family. In terms of assembly, core subunit of respiratory chain NADH dehydrogenase (Complex I) which is composed of 45 different subunits.

Its subcellular location is the mitochondrion inner membrane. The enzyme catalyses a ubiquinone + NADH + 5 H(+)(in) = a ubiquinol + NAD(+) + 4 H(+)(out). Functionally, core subunit of the mitochondrial membrane respiratory chain NADH dehydrogenase (Complex I) which catalyzes electron transfer from NADH through the respiratory chain, using ubiquinone as an electron acceptor. Part of the enzyme membrane arm which is embedded in the lipid bilayer and involved in proton translocation. This is NADH-ubiquinone oxidoreductase chain 4L (MT-ND4L) from Mammuthus primigenius (Siberian woolly mammoth).